A 226-amino-acid chain; its full sequence is Sugar fermentation stimulation protein homolog (226 aa).

It belongs to the SfsA family.

The chain is Sugar fermentation stimulation protein homolog from Ruminiclostridium cellulolyticum (strain ATCC 35319 / DSM 5812 / JCM 6584 / H10) (Clostridium cellulolyticum).